We begin with the raw amino-acid sequence, 1512 residues long: DNA polymerase (1512 aa).

Belongs to the DNA polymerase type-B family.

It localises to the host nucleus. The catalysed reaction is DNA(n) + a 2'-deoxyribonucleoside 5'-triphosphate = DNA(n+1) + diphosphate. The polypeptide is DNA polymerase (57/58) (Ictalurid herpesvirus 1 (strain Auburn) (IcHV-1)).